Here is a 243-residue protein sequence, read N- to C-terminus: Ribosomal RNA small subunit methyltransferase J (243 aa).

S-adenosyl-L-methionine is bound by residues 112 to 113 (ER) and aspartate 164.

This sequence belongs to the methyltransferase superfamily. RsmJ family.

It is found in the cytoplasm. The enzyme catalyses guanosine(1516) in 16S rRNA + S-adenosyl-L-methionine = N(2)-methylguanosine(1516) in 16S rRNA + S-adenosyl-L-homocysteine + H(+). Functionally, specifically methylates the guanosine in position 1516 of 16S rRNA. In Legionella pneumophila subsp. pneumophila (strain Philadelphia 1 / ATCC 33152 / DSM 7513), this protein is Ribosomal RNA small subunit methyltransferase J.